We begin with the raw amino-acid sequence, 340 residues long: Trimethylamine N-oxide transport system ATP-binding protein TmoW (340 aa).

Positions 32-268 constitute an ABC transporter domain; it reads GRSFDDIRAD…PTTGYVAKFT (237 aa). 64–71 contacts ATP; it reads GLSGSGKS.

This sequence belongs to the ABC transporter superfamily. In terms of assembly, the complex is probably composed of two ATP-binding proteins (TmoW), two transmembrane proteins (TmoV) and a solute-binding protein (TmoX).

Its subcellular location is the cell inner membrane. The enzyme catalyses a quaternary ammonium(out) + ATP + H2O = a quaternary ammonium(in) + ADP + phosphate + H(+). Functionally, part of the ABC transporter complex TmoXWV involved in trimethylamine N-oxide (TMAO) import. Responsible for energy coupling to the transport system. Is specific for TMAO and essential for TMAO metabolism. The sequence is that of Trimethylamine N-oxide transport system ATP-binding protein TmoW from Ruegeria pomeroyi (strain ATCC 700808 / DSM 15171 / DSS-3) (Silicibacter pomeroyi).